We begin with the raw amino-acid sequence, 172 residues long: Phosphopantetheine adenylyltransferase (172 aa).

Substrate is bound at residue Thr14. Residues 14-15 and His22 each bind ATP; that span reads TF. Substrate contacts are provided by Lys46, Leu78, and Arg92. ATP is bound by residues 93–95, Glu103, and 128–134; these read GMR and WLYISST.

Belongs to the bacterial CoaD family. In terms of assembly, homohexamer. Requires Mg(2+) as cofactor.

Its subcellular location is the cytoplasm. The catalysed reaction is (R)-4'-phosphopantetheine + ATP + H(+) = 3'-dephospho-CoA + diphosphate. It functions in the pathway cofactor biosynthesis; coenzyme A biosynthesis; CoA from (R)-pantothenate: step 4/5. In terms of biological role, reversibly transfers an adenylyl group from ATP to 4'-phosphopantetheine, yielding dephospho-CoA (dPCoA) and pyrophosphate. This chain is Phosphopantetheine adenylyltransferase, found in Solidesulfovibrio magneticus (strain ATCC 700980 / DSM 13731 / RS-1) (Desulfovibrio magneticus).